A 362-amino-acid chain; its full sequence is uncharacterized protein (362 aa).

N-acetylalanine is present on alanine 2.

The protein belongs to the Gfo/Idh/MocA family. As to quaternary structure, homodimer.

This is an uncharacterized protein from Arabidopsis thaliana (Mouse-ear cress).